The following is a 64-amino-acid chain: MLCLPVFIILLLLASPAAPNPLQTRIQSNLIRAGPEDANMKTDKRVISGLLAGILVPLIDAIMG.

Positions 1–19 are cleaved as a signal peptide; it reads MLCLPVFIILLLLASPAAP. The propeptide occupies 20 to 43; that stretch reads NPLQTRIQSNLIRAGPEDANMKTD. Position 63 is a methionine amide (methionine 63).

It belongs to the conotoxin T superfamily. In terms of tissue distribution, expressed by the venom duct.

The protein resides in the secreted. The protein is Conotoxin VnMLCL-042 of Conus ventricosus (Mediterranean cone).